The chain runs to 181 residues: Regulator of G-protein signaling 10 (181 aa).

A disordered region spans residues 1–35 (MFTRAVSRLSRKRPPSDIHDGDGSSSSGHQSLKST). 2 positions are modified to phosphoserine: Ser24 and Ser41. The region spanning 41-156 (SLENLLEDPE…LKSDLFLKHR (116 aa)) is the RGS domain. A lipid anchor (S-palmitoyl cysteine) is attached at Cys74. The segment at 157–181 (RTEEEEEDPPDAQTAAKRASRIYNT) is disordered. Ser176 is modified (phosphoserine).

As to quaternary structure, interacts with GNAZ, GNAI1 and GNAI3. Associates specifically with the activated, GTP-bound forms of GNAZ and GNAI3.

The protein localises to the cytoplasm. The protein resides in the cytosol. It localises to the nucleus. Functionally, regulates G protein-coupled receptor signaling cascades, including signaling downstream of the muscarinic acetylcholine receptor CHRM2. Inhibits signal transduction by increasing the GTPase activity of G protein alpha subunits, thereby driving them into their inactive GDP-bound form. Modulates the activity of potassium channels that are activated in response to CHRM2 signaling. Activity on GNAZ is inhibited by palmitoylation of the G-protein. This is Regulator of G-protein signaling 10 (Rgs10) from Rattus norvegicus (Rat).